Here is a 677-residue protein sequence, read N- to C-terminus: UvrABC system protein B (677 aa).

In terms of domain architecture, Helicase ATP-binding spans 24 to 412 (EGVLQGVPAQ…EGIVVEQVIR (389 aa)). 37–44 (GVTGSGKT) provides a ligand contact to ATP. A Beta-hairpin motif is present at residues 90 to 113 (YYDYYQPEAYLPNSDTYIEKDLAI). Residues 429-591 (QIDDLMEEIQ…ITPQQIKKAR (163 aa)) form the Helicase C-terminal domain. One can recognise a UVR domain in the interval 636-671 (EKSIERTRKLMQEAAKKLEFIEAAQYRNELLKLEDL).

Belongs to the UvrB family. Forms a heterotetramer with UvrA during the search for lesions. Interacts with UvrC in an incision complex.

The protein localises to the cytoplasm. Functionally, the UvrABC repair system catalyzes the recognition and processing of DNA lesions. A damage recognition complex composed of 2 UvrA and 2 UvrB subunits scans DNA for abnormalities. Upon binding of the UvrA(2)B(2) complex to a putative damaged site, the DNA wraps around one UvrB monomer. DNA wrap is dependent on ATP binding by UvrB and probably causes local melting of the DNA helix, facilitating insertion of UvrB beta-hairpin between the DNA strands. Then UvrB probes one DNA strand for the presence of a lesion. If a lesion is found the UvrA subunits dissociate and the UvrB-DNA preincision complex is formed. This complex is subsequently bound by UvrC and the second UvrB is released. If no lesion is found, the DNA wraps around the other UvrB subunit that will check the other stand for damage. The chain is UvrABC system protein B from Bacteroides thetaiotaomicron (strain ATCC 29148 / DSM 2079 / JCM 5827 / CCUG 10774 / NCTC 10582 / VPI-5482 / E50).